The following is a 277-amino-acid chain: RAD52 motif-containing protein 1 (277 aa).

The RRM domain occupies Q15–K95.

Homodimer.

The protein localises to the nucleus. Its subcellular location is the cytoplasm. It localises to the nucleolus. Functionally, confers resistance to the antitumor agent cisplatin. Binds preferentially to sites of DNA modified by cisplatin in vitro. Binds to double-stranded DNA in a cooperative manner resulting in the formation of filament-like structures. Binds to single-stranded DNA with no cooperativity. Binds to RNA. This Gallus gallus (Chicken) protein is RAD52 motif-containing protein 1 (RDM1).